Reading from the N-terminus, the 708-residue chain is MARKTPLKRYRNIGISAHIDAGKTTTTERVLFYTGVSHKIGEVHDGAATMDWMEQEQERGITITSAATTCFWSGMAKQFDEHRINIIDTPGHVDFTIEVERSMRVLDGACMVYCAVGGVQPQSETVWRQANKYKVPRLAFINKMDRVGADFYRVVEQIKTRLGGKPVPLVIPIGKEDDFEGVVDLITMKAIYWDEASQGMEYDEREIPAELQEKAEEYREYLVENAAEATEELMNEYLENGELTVDQINSAIRQLTINNEIIPLLCGTAFKNKGVQKMLDAVIQYLPAPMDVPAIKGILDDKDESEGTREASDEAPFSALAFKIMNDKFVGNLTFVRVYSGVLTQGSSVYNPVKMKRERVGRIVQMMANSQEELQEIRTGDIAALVGMKDVTTGDTLCDEQNVITLERMEFPDPVISLAVEPKTKADQEKMSIALGRLAKEDPSFRVHTDEESGQTIISGMGELHLEILVDRMKREFGVEANIGAPQVAYRETIRNTVEQEGKFVRQTGGRGKFGHVWLRLEPMDPAGDVLYEFKEEVVGGTVPKEFHGAVDKGIQERMKNGVLAGYPIVGVKATLYDGSYHDVDSDELSFKMAGSIAFRKGFMAANPTLLEPVMKVEVETPEDYMGDIMGDLSRRRGMVQGMEDLPGGTKQIRAEVPLAEMFGYATQMRSMSQGRATYSMEFQKYAEIPKSVAEAIISKFNNKDDDE.

The 283-residue stretch at Lys-8–Met-290 folds into the tr-type G domain. Residues Ala-17–Thr-24, Asp-88–His-92, and Asn-142–Asp-145 each bind GTP.

The protein belongs to the TRAFAC class translation factor GTPase superfamily. Classic translation factor GTPase family. EF-G/EF-2 subfamily.

The protein resides in the cytoplasm. Catalyzes the GTP-dependent ribosomal translocation step during translation elongation. During this step, the ribosome changes from the pre-translocational (PRE) to the post-translocational (POST) state as the newly formed A-site-bound peptidyl-tRNA and P-site-bound deacylated tRNA move to the P and E sites, respectively. Catalyzes the coordinated movement of the two tRNA molecules, the mRNA and conformational changes in the ribosome. The chain is Elongation factor G from Psychrobacter arcticus (strain DSM 17307 / VKM B-2377 / 273-4).